The following is a 78-amino-acid chain: Acyl carrier protein (78 aa).

The Carrier domain maps to 1–76 (MALFEDIQAV…DVVKYIEDNK (76 aa)). The residue at position 36 (Ser-36) is an O-(pantetheine 4'-phosphoryl)serine.

The protein belongs to the acyl carrier protein (ACP) family. 4'-phosphopantetheine is transferred from CoA to a specific serine of apo-ACP by AcpS. This modification is essential for activity because fatty acids are bound in thioester linkage to the sulfhydryl of the prosthetic group.

It localises to the cytoplasm. It functions in the pathway lipid metabolism; fatty acid biosynthesis. Carrier of the growing fatty acid chain in fatty acid biosynthesis. This chain is Acyl carrier protein, found in Helicobacter pylori (strain ATCC 700392 / 26695) (Campylobacter pylori).